Consider the following 132-residue polypeptide: MGQSFNAPYEAIGEELLSQLVDTFYERVASHPLLKPIFPSDLTETARKQKQFLTQYLGGPPLYTEEHGHPMLRARHLPFPITNERADAWLSCMKDAMDHVGLEGEIREFLFGRLELTARHMVNQTEAEDRSS.

Heme is bound by residues T45, K48, Y63, and H76.

Belongs to the truncated hemoglobin family. Group II subfamily. In terms of assembly, monomer. It depends on heme as a cofactor.

Its function is as follows. Hemoglobin-like protein that exhibits a low peroxidase activity. Its very high oxygen affinity may rule out the possibility that it is involved in oxygen transport. The polypeptide is Group 2 truncated hemoglobin YjbI (yjbI) (Bacillus subtilis (strain 168)).